A 101-amino-acid polypeptide reads, in one-letter code: Small ribosomal subunit protein uS14 (101 aa).

The protein belongs to the universal ribosomal protein uS14 family. As to quaternary structure, part of the 30S ribosomal subunit. Contacts proteins S3 and S10.

Functionally, binds 16S rRNA, required for the assembly of 30S particles and may also be responsible for determining the conformation of the 16S rRNA at the A site. This chain is Small ribosomal subunit protein uS14, found in Ruegeria pomeroyi (strain ATCC 700808 / DSM 15171 / DSS-3) (Silicibacter pomeroyi).